The primary structure comprises 432 residues: MSKISKILAREIMDSRGNPTVEADVYLESGAFGRAAAPSGASTGSREALELRDGDKARYLGKGVLKAVAAINVNIQAALIGQSALDQANIDQIMIDLDGTENKEQFGANAILAVSLANAKAAANEKKVQLFEHIADLNGTPGVYSLPLPMMNIINGGEHADNNVDIQEFMVQPVGAKSFREALRMGAEIFHALKKVLSSKGMSTSVGDEGGFAPNLESNADALAVIKVAVEAAGYELGKDVTLAMDCAASEFYDADKGIYDLTGEGKQFTANEFSDFLGELCKEYPIVSIEDGLDESDWDGFKYQTDLLGDKVQIVGDDLFVTNTKILARGIENGIGNSILIKFNQIGTLTETLAAIKMAKDAGFTAVISHRSGETEDATIADLAVGTAAGQIKTGSLCRSDRVSKYNQLLRIEEFLGDKAIFNGLSEVKGQ.

Gln167 serves as a coordination point for (2R)-2-phosphoglycerate. Glu209 acts as the Proton donor in catalysis. 3 residues coordinate Mg(2+): Asp246, Glu291, and Asp318. Positions 343, 372, 373, and 394 each coordinate (2R)-2-phosphoglycerate. Lys343 functions as the Proton acceptor in the catalytic mechanism.

It belongs to the enolase family. In terms of assembly, component of the RNA degradosome, a multiprotein complex involved in RNA processing and mRNA degradation. Mg(2+) is required as a cofactor.

It localises to the cytoplasm. Its subcellular location is the secreted. The protein localises to the cell surface. The enzyme catalyses (2R)-2-phosphoglycerate = phosphoenolpyruvate + H2O. It functions in the pathway carbohydrate degradation; glycolysis; pyruvate from D-glyceraldehyde 3-phosphate: step 4/5. Catalyzes the reversible conversion of 2-phosphoglycerate (2-PG) into phosphoenolpyruvate (PEP). It is essential for the degradation of carbohydrates via glycolysis. In Colwellia psychrerythraea (strain 34H / ATCC BAA-681) (Vibrio psychroerythus), this protein is Enolase.